A 451-amino-acid chain; its full sequence is Trigger factor (451 aa).

The PPIase FKBP-type domain occupies 163-248 (GDIIDMEYTV…IKALYANILP (86 aa)).

It belongs to the FKBP-type PPIase family. Tig subfamily.

It localises to the cytoplasm. It catalyses the reaction [protein]-peptidylproline (omega=180) = [protein]-peptidylproline (omega=0). Involved in protein export. Acts as a chaperone by maintaining the newly synthesized protein in an open conformation. Functions as a peptidyl-prolyl cis-trans isomerase. This chain is Trigger factor, found in Leptospira interrogans serogroup Icterohaemorrhagiae serovar copenhageni (strain Fiocruz L1-130).